The chain runs to 201 residues: MAFYFDQDDAALEHFDRYFLRQSQEKREHAQELMSLQNLRGGRICLHDIRKPEGQGWESGLKAMECTFHLEKNINQSLLELHQLARENGDPQLCDFLENDFLNQQAKTIKELGGYLSNLHKMGAPEAGLAEYLFNKLTLGRSQKHTRAQTGPTATGCLPLLAPPGGTSMFPFQNILFIFLLSVLPLLAIKLSVLKAIKVSS.

A Ferritin-like diiron domain is found at 1–123 (MAFYFDQDDA…GYLSNLHKMG (123 aa)).

This sequence belongs to the ferritin family.

The protein is Putative ferritin heavy polypeptide-like 19 (FTH1P19) of Homo sapiens (Human).